Reading from the N-terminus, the 193-residue chain is AP-3 complex subunit sigma-2 (193 aa).

This sequence belongs to the adaptor complexes small subunit family. As to quaternary structure, adaptor protein complex 3 (AP-3) is a heterotetramer composed of two large adaptins (delta-type subunit AP3D1 and beta-type subunit AP3B1 or AP3B2), a medium adaptin (mu-type subunit AP3M1 or AP3M2) and a small adaptin (sigma-type subunit APS1 or AP3S2). Interacts with AGAP1. AP-3 associates with the BLOC-1 complex.

The protein localises to the golgi apparatus. It is found in the cytoplasmic vesicle membrane. Part of the AP-3 complex, an adaptor-related complex which is not clathrin-associated. The complex is associated with the Golgi region as well as more peripheral structures. It facilitates the budding of vesicles from the Golgi membrane and may be directly involved in trafficking to lysosomes. In concert with the BLOC-1 complex, AP-3 is required to target cargos into vesicles assembled at cell bodies for delivery into neurites and nerve terminals. The protein is AP-3 complex subunit sigma-2 (AP3S2) of Bos taurus (Bovine).